The following is a 279-amino-acid chain: Bifunctional protein FolD (279 aa).

NADP(+) contacts are provided by residues 164-166 (GRS), S189, and I230.

The protein belongs to the tetrahydrofolate dehydrogenase/cyclohydrolase family. As to quaternary structure, homodimer.

It catalyses the reaction (6R)-5,10-methylene-5,6,7,8-tetrahydrofolate + NADP(+) = (6R)-5,10-methenyltetrahydrofolate + NADPH. It carries out the reaction (6R)-5,10-methenyltetrahydrofolate + H2O = (6R)-10-formyltetrahydrofolate + H(+). Its pathway is one-carbon metabolism; tetrahydrofolate interconversion. Functionally, catalyzes the oxidation of 5,10-methylenetetrahydrofolate to 5,10-methenyltetrahydrofolate and then the hydrolysis of 5,10-methenyltetrahydrofolate to 10-formyltetrahydrofolate. The protein is Bifunctional protein FolD of Agathobacter rectalis (strain ATCC 33656 / DSM 3377 / JCM 17463 / KCTC 5835 / VPI 0990) (Eubacterium rectale).